The primary structure comprises 447 residues: N-succinylarginine dihydrolase (447 aa).

Residues 19 to 28 (AGLSFGNEAS), N110, and 137 to 138 (HR) each bind substrate. The active site involves E174. R212 contacts substrate. Residue H248 is part of the active site. The substrate site is built by D250 and N359. C365 functions as the Nucleophile in the catalytic mechanism.

The protein belongs to the succinylarginine dihydrolase family. As to quaternary structure, homodimer.

It catalyses the reaction N(2)-succinyl-L-arginine + 2 H2O + 2 H(+) = N(2)-succinyl-L-ornithine + 2 NH4(+) + CO2. It participates in amino-acid degradation; L-arginine degradation via AST pathway; L-glutamate and succinate from L-arginine: step 2/5. In terms of biological role, catalyzes the hydrolysis of N(2)-succinylarginine into N(2)-succinylornithine, ammonia and CO(2). The sequence is that of N-succinylarginine dihydrolase from Escherichia coli O81 (strain ED1a).